The following is a 256-amino-acid chain: ATP synthase subunit a (256 aa).

The propeptide at 1–8 (MYQFNFIL) is removed in mature form. The next 7 helical transmembrane spans lie at 34–54 (ITNI…YHLL), 92–112 (YFPF…IGMV), 121–141 (HFIL…FLGL), 148–168 (FFSL…LVLI), 186–206 (ANIL…YNIM), 209–229 (GILF…FSGL), and 230–250 (ELAI…SYIK).

This sequence belongs to the ATPase A chain family. In terms of assembly, F-type ATPases have 2 components, CF(1) - the catalytic core - and CF(0) - the membrane proton channel. CF(1) has five subunits: alpha(3), beta(3), gamma(1), delta(1), epsilon(1). CF(0) has three main subunits: a, b and c.

The protein localises to the mitochondrion inner membrane. Mitochondrial membrane ATP synthase (F(1)F(0) ATP synthase or Complex V) produces ATP from ADP in the presence of a proton gradient across the membrane which is generated by electron transport complexes of the respiratory chain. F-type ATPases consist of two structural domains, F(1) - containing the extramembraneous catalytic core and F(0) - containing the membrane proton channel, linked together by a central stalk and a peripheral stalk. During catalysis, ATP synthesis in the catalytic domain of F(1) is coupled via a rotary mechanism of the central stalk subunits to proton translocation. Key component of the proton channel; it may play a direct role in the translocation of protons across the membrane. This Emericella nidulans (Aspergillus nidulans) protein is ATP synthase subunit a (atp6).